The following is a 540-amino-acid chain: uncharacterized protein (540 aa).

ABC transporter domains are found at residues 2–252 and 320–537; these read IAVN…KLSQ and LRVE…LTEL. 34–41 is an ATP binding site; that stretch reads GANGAGKS.

The protein belongs to the ABC transporter superfamily.

This is an uncharacterized protein from Bacillus subtilis (strain 168).